Here is a 1011-residue protein sequence, read N- to C-terminus: Translation initiation factor IF-2 (1011 aa).

A compositionally biased stretch (basic and acidic residues) spans 49–77 (YIHEHGTEESPRRRSAGEDEFKPKIDLSK). Disordered regions lie at residues 49 to 152 (YIHE…RFIT) and 187 to 407 (AAPA…LSLS). Pro residues predominate over residues 93–104 (APPPPPPPPPRP). Over residues 105–115 (AVKAPSPVSQE) the composition is skewed to low complexity. Positions 116–126 (PRPPAVPPAPQ) are enriched in pro residues. Low complexity-rich tracts occupy residues 187-212 (AAPAEEPKAAAPATTAPEAPEVKAPV) and 228-242 (TAKPEAPAAPGAATP). Composition is skewed to pro residues over residues 243-252 (APTPGRPLPG) and 276-290 (SAPPPAPPRPTPPPQ). Positions 316-329 (GPGGGSGGPGGFQR) are enriched in gly residues. The span at 361-380 (LAPPGAPANKPAGRPAPARR) shows a compositional bias: low complexity. One can recognise a tr-type G domain in the interval 502-678 (VRPPVVTIMG…CLVADLGDLK (177 aa)). A G1 region spans residues 511-518 (GHVDHGKT). 511-518 (GHVDHGKT) is a GTP binding site. Residues 536–540 (GITQH) form a G2 region. Residues 564-567 (DTPG) form a G3 region. GTP is bound by residues 564-568 (DTPGH) and 618-621 (NKID). Residues 618-621 (NKID) form a G4 region. Positions 654 to 656 (SAK) are G5.

The protein belongs to the TRAFAC class translation factor GTPase superfamily. Classic translation factor GTPase family. IF-2 subfamily.

Its subcellular location is the cytoplasm. Functionally, one of the essential components for the initiation of protein synthesis. Protects formylmethionyl-tRNA from spontaneous hydrolysis and promotes its binding to the 30S ribosomal subunits. Also involved in the hydrolysis of GTP during the formation of the 70S ribosomal complex. This Koribacter versatilis (strain Ellin345) protein is Translation initiation factor IF-2.